The primary structure comprises 759 residues: Catalase-peroxidase (759 aa).

The segment at 1–24 (MTQDKCPFKEQPSQPNFAGGGTSN) is disordered. The tryptophyl-tyrosyl-methioninium (Trp-Tyr) (with M-268) cross-link spans 96 to 242 (WHSAGTYRVF…LAAAHMGLIY (147 aa)). H97 functions as the Proton acceptor in the catalytic mechanism. A cross-link (tryptophyl-tyrosyl-methioninium (Tyr-Met) (with W-96)) is located at residues 242–268 (YVNPEGPDGNPDPIAAAHDIRDTFGRM). A heme b-binding site is contributed by H283.

Belongs to the peroxidase family. Peroxidase/catalase subfamily. Homodimer or homotetramer. Heme b is required as a cofactor. Post-translationally, formation of the three residue Trp-Tyr-Met cross-link is important for the catalase, but not the peroxidase activity of the enzyme.

It localises to the cytoplasm. It carries out the reaction H2O2 + AH2 = A + 2 H2O. The catalysed reaction is 2 H2O2 = O2 + 2 H2O. In terms of biological role, bifunctional enzyme with both catalase and broad-spectrum peroxidase activity. The chain is Catalase-peroxidase from Neosartorya fischeri (strain ATCC 1020 / DSM 3700 / CBS 544.65 / FGSC A1164 / JCM 1740 / NRRL 181 / WB 181) (Aspergillus fischerianus).